We begin with the raw amino-acid sequence, 431 residues long: Histidinol dehydrogenase (431 aa).

Positions 127, 189, and 212 each coordinate NAD(+). The substrate site is built by S237, Q259, and H262. Zn(2+) is bound by residues Q259 and H262. Catalysis depends on proton acceptor residues E326 and H327. Residues H327, D360, E414, and H419 each contribute to the substrate site. Residue D360 coordinates Zn(2+). A Zn(2+)-binding site is contributed by H419.

The protein belongs to the histidinol dehydrogenase family. The cofactor is Zn(2+).

It carries out the reaction L-histidinol + 2 NAD(+) + H2O = L-histidine + 2 NADH + 3 H(+). It functions in the pathway amino-acid biosynthesis; L-histidine biosynthesis; L-histidine from 5-phospho-alpha-D-ribose 1-diphosphate: step 9/9. In terms of biological role, catalyzes the sequential NAD-dependent oxidations of L-histidinol to L-histidinaldehyde and then to L-histidine. The polypeptide is Histidinol dehydrogenase (Xylella fastidiosa (strain 9a5c)).